Here is a 489-residue protein sequence, read N- to C-terminus: Mitochondrial distribution and morphology protein 10 (489 aa).

Belongs to the MDM10 family. As to quaternary structure, component of the ER-mitochondria encounter structure (ERMES) or MDM complex, composed of MMM1, MDM10, MDM12 and MDM34. Associates with the mitochondrial outer membrane sorting assembly machinery SAM(core) complex.

Its subcellular location is the mitochondrion outer membrane. Functionally, component of the ERMES/MDM complex, which serves as a molecular tether to connect the endoplasmic reticulum and mitochondria. Components of this complex are involved in the control of mitochondrial shape and protein biogenesis and may function in phospholipid exchange. MDM10 is involved in the late assembly steps of the general translocase of the mitochondrial outer membrane (TOM complex). Functions in the TOM40-specific route of the assembly of outer membrane beta-barrel proteins, including the association of TOM40 with the receptor TOM22 and small TOM proteins. Can associate with the SAM(core) complex as well as the MDM12-MMM1 complex, both involved in late steps of the major beta-barrel assembly pathway, that is responsible for biogenesis of all outer membrane beta-barrel proteins. May act as a switch that shuttles between both complexes and channels precursor proteins into the TOM40-specific pathway. Plays a role in mitochondrial morphology and in the inheritance of mitochondria. The sequence is that of Mitochondrial distribution and morphology protein 10 from Arthroderma otae (strain ATCC MYA-4605 / CBS 113480) (Microsporum canis).